Here is a 172-residue protein sequence, read N- to C-terminus: Phosphatidylglycerophosphatase A (172 aa).

Over 1–31 (MTILPRHKDVAKSRLKMSNPWHLLAVGFGSG) the chain is Cytoplasmic. A helical membrane pass occupies residues 32-52 (LSPIVPGTMGSLAAIPFWYLM). Threonine 53 is a topological domain (periplasmic). Residues 54-74 (FLPWQLYSLVVMLGICIGVYL) traverse the membrane as a helical segment. Over 75 to 141 (CHQTAKDMGV…RWFDRNVHGG (67 aa)) the chain is Cytoplasmic. Residues 142 to 162 (MGIMIDDIVAGVISAGILYFI) form a helical membrane-spanning segment. Residues 163 to 172 (GHHWPLGILS) lie on the Periplasmic side of the membrane.

Requires Mg(2+) as cofactor.

The protein localises to the cell inner membrane. It carries out the reaction a 1,2-diacyl-sn-glycero-3-phospho-(1'-sn-glycero-3'-phosphate) + H2O = a 1,2-diacyl-sn-glycero-3-phospho-(1'-sn-glycerol) + phosphate. Its pathway is phospholipid metabolism; phosphatidylglycerol biosynthesis; phosphatidylglycerol from CDP-diacylglycerol: step 2/2. Lipid phosphatase which dephosphorylates phosphatidylglycerophosphate (PGP) to phosphatidylglycerol (PG). The chain is Phosphatidylglycerophosphatase A (pgpA) from Escherichia coli (strain K12).